A 239-amino-acid polypeptide reads, in one-letter code: Geranylgeranylglyceryl phosphate synthase (239 aa).

Mg(2+) contacts are provided by D18 and S45. Residues 166 to 172, 197 to 198, and 219 to 220 contribute to the sn-glycerol 1-phosphate site; these read YLEAGSG, GG, and GT.

This sequence belongs to the GGGP/HepGP synthase family. Group II subfamily. Mg(2+) is required as a cofactor.

It localises to the cytoplasm. The enzyme catalyses sn-glycerol 1-phosphate + (2E,6E,10E)-geranylgeranyl diphosphate = sn-3-O-(geranylgeranyl)glycerol 1-phosphate + diphosphate. Its pathway is membrane lipid metabolism; glycerophospholipid metabolism. Its function is as follows. Prenyltransferase that catalyzes the transfer of the geranylgeranyl moiety of geranylgeranyl diphosphate (GGPP) to the C3 hydroxyl of sn-glycerol-1-phosphate (G1P). This reaction is the first ether-bond-formation step in the biosynthesis of archaeal membrane lipids. The polypeptide is Geranylgeranylglyceryl phosphate synthase (Pyrobaculum arsenaticum (strain DSM 13514 / JCM 11321 / PZ6)).